Consider the following 371-residue polypeptide: Histidinol-phosphate aminotransferase (371 aa).

Lys222 bears the N6-(pyridoxal phosphate)lysine mark.

Belongs to the class-II pyridoxal-phosphate-dependent aminotransferase family. Histidinol-phosphate aminotransferase subfamily. In terms of assembly, homodimer. It depends on pyridoxal 5'-phosphate as a cofactor.

It catalyses the reaction L-histidinol phosphate + 2-oxoglutarate = 3-(imidazol-4-yl)-2-oxopropyl phosphate + L-glutamate. Its pathway is amino-acid biosynthesis; L-histidine biosynthesis; L-histidine from 5-phospho-alpha-D-ribose 1-diphosphate: step 7/9. The polypeptide is Histidinol-phosphate aminotransferase (Anoxybacillus flavithermus (strain DSM 21510 / WK1)).